The sequence spans 371 residues: Glycosyltransferase 8 domain-containing protein 1 (371 aa).

The Cytoplasmic segment spans residues 1 to 7 (MSFRKVN). Residues 8–28 (IVILVLAVALFLLVLHHNFLG) traverse the membrane as a helical; Signal-anchor for type II membrane protein segment. Over 29–371 (LSSLLRNEVS…RRHVEISNTK (343 aa)) the chain is Lumenal. Residues asparagine 103 and asparagine 257 are each glycosylated (N-linked (GlcNAc...) asparagine).

It belongs to the glycosyltransferase 8 family.

It localises to the membrane. This Bos taurus (Bovine) protein is Glycosyltransferase 8 domain-containing protein 1 (GLT8D1).